We begin with the raw amino-acid sequence, 238 residues long: Ribonuclease PH (238 aa).

Residues R86 and 124–126 (GTR) contribute to the phosphate site.

This sequence belongs to the RNase PH family. Homohexameric ring arranged as a trimer of dimers.

The enzyme catalyses tRNA(n+1) + phosphate = tRNA(n) + a ribonucleoside 5'-diphosphate. Phosphorolytic 3'-5' exoribonuclease that plays an important role in tRNA 3'-end maturation. Removes nucleotide residues following the 3'-CCA terminus of tRNAs; can also add nucleotides to the ends of RNA molecules by using nucleoside diphosphates as substrates, but this may not be physiologically important. Probably plays a role in initiation of 16S rRNA degradation (leading to ribosome degradation) during starvation. The protein is Ribonuclease PH of Parvibaculum lavamentivorans (strain DS-1 / DSM 13023 / NCIMB 13966).